Consider the following 549-residue polypeptide: Cell pattern formation-associated protein StuA (549 aa).

One can recognise an HTH APSES-type domain in the interval R86–P192. The segment at residues G120–E141 is a DNA-binding region (H-T-H motif). Disordered stretches follow at residues A205–I227, S246–R288, R332–N466, and A514–G549. Polar residues predominate over residues S246–Q266. Composition is skewed to basic and acidic residues over residues R278–R288, R332–H346, and R385–S395. The tract at residues T516–Q545 is nuclear localization domain. Residues A532–G549 are compositionally biased toward low complexity.

The protein belongs to the EFG1/PHD1/stuA family.

The protein localises to the nucleus. Its function is as follows. Transcription factor that regulates asexual reproduction. Binds the StuA-response elements (StRE) with the consensus sequence 5'-(A/T)CGCG(T/A)N(A/C)-3' at the promoters of target genes. This Gibberella moniliformis (strain M3125 / FGSC 7600) (Maize ear and stalk rot fungus) protein is Cell pattern formation-associated protein StuA.